The following is a 274-amino-acid chain: Large ribosomal subunit protein uL2cz/uL2cy (274 aa).

2 disordered regions span residues 1–23 (MAIH…SKVK) and 224–274 (NPVD…RRSK).

This sequence belongs to the universal ribosomal protein uL2 family. Part of the 50S ribosomal subunit.

Its subcellular location is the plastid. The protein resides in the chloroplast. The sequence is that of Large ribosomal subunit protein uL2cz/uL2cy (rpl2-A) from Lactuca sativa (Garden lettuce).